A 259-amino-acid chain; its full sequence is Ribonuclease HII (259 aa).

The RNase H type-2 domain occupies 70–258 (TLIVGIDEVG…VKSLVLGKKE (189 aa)). Residues D76, E77, and D168 each contribute to the a divalent metal cation site.

Belongs to the RNase HII family. It depends on Mn(2+) as a cofactor. The cofactor is Mg(2+).

The protein localises to the cytoplasm. It carries out the reaction Endonucleolytic cleavage to 5'-phosphomonoester.. Endonuclease that specifically degrades the RNA of RNA-DNA hybrids. This is Ribonuclease HII from Streptococcus pneumoniae (strain ATCC 700669 / Spain 23F-1).